The chain runs to 164 residues: UBA-like domain-containing protein 2 (164 aa).

The residue at position 2 (Ser-2) is an N-acetylserine. Residues 144–164 (PPGASQGGAPQKAMAAMDGQR) form a disordered region.

The protein belongs to the UBALD family.

The protein is UBA-like domain-containing protein 2 (Ubald2) of Mus musculus (Mouse).